The sequence spans 288 residues: 4-diphosphocytidyl-2-C-methyl-D-erythritol kinase (288 aa).

The active site involves K11. An ATP-binding site is contributed by 100–110 (PIAAGLGSGSS). The active site involves D140.

The protein belongs to the GHMP kinase family. IspE subfamily.

It catalyses the reaction 4-CDP-2-C-methyl-D-erythritol + ATP = 4-CDP-2-C-methyl-D-erythritol 2-phosphate + ADP + H(+). The protein operates within isoprenoid biosynthesis; isopentenyl diphosphate biosynthesis via DXP pathway; isopentenyl diphosphate from 1-deoxy-D-xylulose 5-phosphate: step 3/6. Functionally, catalyzes the phosphorylation of the position 2 hydroxy group of 4-diphosphocytidyl-2C-methyl-D-erythritol. In Wolbachia sp. subsp. Drosophila simulans (strain wRi), this protein is 4-diphosphocytidyl-2-C-methyl-D-erythritol kinase.